The chain runs to 211 residues: 2,3-bisphosphoglycerate-dependent phosphoglycerate mutase (211 aa).

Residues Arg9 to Asn16, Thr22 to Gly23, Arg61, Glu88 to Tyr91, Lys99, Arg115 to Arg116, and Gly159 to Asn160 contribute to the substrate site. The Tele-phosphohistidine intermediate role is filled by His10. Glu88 serves as the catalytic Proton donor/acceptor.

The protein belongs to the phosphoglycerate mutase family. BPG-dependent PGAM subfamily. Homodimer.

The catalysed reaction is (2R)-2-phosphoglycerate = (2R)-3-phosphoglycerate. The protein operates within carbohydrate degradation; glycolysis; pyruvate from D-glyceraldehyde 3-phosphate: step 3/5. Functionally, catalyzes the interconversion of 2-phosphoglycerate and 3-phosphoglycerate. The chain is 2,3-bisphosphoglycerate-dependent phosphoglycerate mutase from Allorhizobium ampelinum (strain ATCC BAA-846 / DSM 112012 / S4) (Agrobacterium vitis (strain S4)).